The chain runs to 567 residues: Phenylalanine--tRNA ligase beta subunit (567 aa).

Residues 287-362 (YFQEEVEFNV…IGEGLASFHP (76 aa)) enclose the B5 domain. The Mg(2+) site is built by aspartate 340, aspartate 346, glutamate 349, and aspartate 350.

Belongs to the phenylalanyl-tRNA synthetase beta subunit family. Type 2 subfamily. In terms of assembly, tetramer of two alpha and two beta subunits. Requires Mg(2+) as cofactor.

Its subcellular location is the cytoplasm. The catalysed reaction is tRNA(Phe) + L-phenylalanine + ATP = L-phenylalanyl-tRNA(Phe) + AMP + diphosphate + H(+). The sequence is that of Phenylalanine--tRNA ligase beta subunit from Borreliella afzelii (strain PKo) (Borrelia afzelii).